Reading from the N-terminus, the 178-residue chain is Probable DNA-directed RNA polymerase subunit delta (178 aa).

In terms of domain architecture, HTH HARE-type spans 14-81 (KSFIDMAYTL…GENLWGLRDW (68 aa)). The segment at 114-178 (LGDDDADEDD…AFEDAEDFND (65 aa)) is disordered. A compositionally biased stretch (acidic residues) spans 116 to 178 (DDDADEDDDI…AFEDAEDFND (63 aa)).

The protein belongs to the RpoE family. RNAP is composed of a core of 2 alpha, a beta and a beta' subunits. The core is associated with a delta subunit and one of several sigma factors.

Participates in both the initiation and recycling phases of transcription. In the presence of the delta subunit, RNAP displays an increased specificity of transcription, a decreased affinity for nucleic acids, and an increased efficiency of RNA synthesis because of enhanced recycling. This is Probable DNA-directed RNA polymerase subunit delta from Staphylococcus epidermidis (strain ATCC 35984 / DSM 28319 / BCRC 17069 / CCUG 31568 / BM 3577 / RP62A).